We begin with the raw amino-acid sequence, 186 residues long: Probable RNA 2'-phosphotransferase (186 aa).

It belongs to the KptA/TPT1 family.

Removes the 2'-phosphate from RNA via an intermediate in which the phosphate is ADP-ribosylated by NAD followed by a presumed transesterification to release the RNA and generate ADP-ribose 1''-2''-cyclic phosphate (APPR&gt;P). May function as an ADP-ribosylase. In Clostridium perfringens (strain SM101 / Type A), this protein is Probable RNA 2'-phosphotransferase.